The primary structure comprises 299 residues: tRNA dimethylallyltransferase (299 aa).

13–20 (GPTASGKT) lines the ATP pocket. A substrate-binding site is contributed by 15 to 20 (TASGKT). An interaction with substrate tRNA region spans residues 38–41 (DSRQ).

The protein belongs to the IPP transferase family. In terms of assembly, monomer. Mg(2+) is required as a cofactor.

It catalyses the reaction adenosine(37) in tRNA + dimethylallyl diphosphate = N(6)-dimethylallyladenosine(37) in tRNA + diphosphate. In terms of biological role, catalyzes the transfer of a dimethylallyl group onto the adenine at position 37 in tRNAs that read codons beginning with uridine, leading to the formation of N6-(dimethylallyl)adenosine (i(6)A). This is tRNA dimethylallyltransferase from Prochlorococcus marinus (strain MIT 9515).